The primary structure comprises 159 residues: Single-stranded DNA-binding protein 2 (159 aa).

One can recognise an SSB domain in the interval 2–104 (MNRVVLVGRL…VVAESVQFLE (103 aa)). The interval 106–159 (RNHAEGATSNNYQNEANYSNNNKTSSYRADTSQKSDSFANEGKPIDINPDDLPF) is disordered. Residues 114 to 127 (SNNYQNEANYSNNN) show a composition bias toward low complexity. A compositionally biased stretch (polar residues) spans 128–143 (KTSSYRADTSQKSDSF).

Homotetramer.

The sequence is that of Single-stranded DNA-binding protein 2 (ssb2) from Listeria innocua serovar 6a (strain ATCC BAA-680 / CLIP 11262).